The chain runs to 234 residues: Phosphoglycolate phosphatase (234 aa).

Catalysis depends on Asp-8, which acts as the Nucleophile. Positions 8 and 10 each coordinate Mg(2+). Lys-157 contributes to the substrate binding site. The Mg(2+) site is built by Asp-180 and Asp-184.

This sequence belongs to the archaeal SPP-like hydrolase family. The cofactor is Mg(2+).

The enzyme catalyses 2-phosphoglycolate + H2O = glycolate + phosphate. Its function is as follows. Catalyzes the dephosphorylation of 2-phosphoglycolate. The chain is Phosphoglycolate phosphatase from Methanoculleus marisnigri (strain ATCC 35101 / DSM 1498 / JR1).